A 244-amino-acid polypeptide reads, in one-letter code: Small ribosomal subunit protein uS2 (244 aa).

A disordered region spans residues 224–244; that stretch reads GQQGSDEAEEAEEAAEEVVAE. Acidic residues predominate over residues 229-244; it reads DEAEEAEEAAEEVVAE.

The protein belongs to the universal ribosomal protein uS2 family.

The chain is Small ribosomal subunit protein uS2 from Desulfitobacterium hafniense (strain DSM 10664 / DCB-2).